Here is a 218-residue protein sequence, read N- to C-terminus: N-(5'-phosphoribosyl)anthranilate isomerase (218 aa).

This sequence belongs to the TrpF family.

It catalyses the reaction N-(5-phospho-beta-D-ribosyl)anthranilate = 1-(2-carboxyphenylamino)-1-deoxy-D-ribulose 5-phosphate. The protein operates within amino-acid biosynthesis; L-tryptophan biosynthesis; L-tryptophan from chorismate: step 3/5. This is N-(5'-phosphoribosyl)anthranilate isomerase from Bordetella bronchiseptica (strain ATCC BAA-588 / NCTC 13252 / RB50) (Alcaligenes bronchisepticus).